The sequence spans 211 residues: Protein-L-isoaspartate O-methyltransferase (211 aa).

Ser-60 is an active-site residue.

The protein belongs to the methyltransferase superfamily. L-isoaspartyl/D-aspartyl protein methyltransferase family.

The protein resides in the cytoplasm. It catalyses the reaction [protein]-L-isoaspartate + S-adenosyl-L-methionine = [protein]-L-isoaspartate alpha-methyl ester + S-adenosyl-L-homocysteine. In terms of biological role, catalyzes the methyl esterification of L-isoaspartyl residues in peptides and proteins that result from spontaneous decomposition of normal L-aspartyl and L-asparaginyl residues. It plays a role in the repair and/or degradation of damaged proteins. In Pseudomonas fluorescens (strain SBW25), this protein is Protein-L-isoaspartate O-methyltransferase.